The primary structure comprises 914 residues: Serine/threonine-protein kinase MST20 (914 aa).

Positions 1-12 (MDGHSNFTQPSD) are enriched in polar residues. 3 disordered regions span residues 1–140 (MDGH…QLQN), 156–184 (NQYS…LTFN), and 251–286 (AMSE…VLRK). Low complexity-rich tracts occupy residues 13 to 26 (TSHA…SSSS), 63 to 72 (RSSTSLRRAP), and 79 to 97 (TPTS…PSSS). The span at 122-136 (ARDRDSDPARNDHGH) shows a compositional bias: basic and acidic residues. Positions 156 to 166 (NQYSAASHRRS) are enriched in basic residues. Over residues 175–184 (PQSSNSLTFN) the composition is skewed to polar residues. Positions 271–280 (RYSDETKEPK) are enriched in basic and acidic residues. Positions 306–319 (ISAPENPVHVTHVG) constitute a CRIB domain. Residues 408 to 615 (SPMISPPASP…RHRSRQSNGL (208 aa)) form a disordered region. 2 stretches are compositionally biased toward low complexity: residues 516 to 548 (AYPA…QAQA) and 562 to 576 (QPQA…SQHQ). The segment covering 577–586 (YSRPTDANGA) has biased composition (polar residues). The segment covering 587-596 (QQTQRPQQPQ) has biased composition (low complexity). A Protein kinase domain is found at 634-885 (YRSFTKIGQG…AHDLLRHEFM (252 aa)). Residues 640 to 648 (IGQGASGGV) and K663 contribute to the ATP site. The active-site Proton acceptor is D753.

It belongs to the protein kinase superfamily. STE Ser/Thr protein kinase family. STE20 subfamily.

The protein localises to the cytoplasm. Its subcellular location is the nucleus. The enzyme catalyses L-seryl-[protein] + ATP = O-phospho-L-seryl-[protein] + ADP + H(+). It carries out the reaction L-threonyl-[protein] + ATP = O-phospho-L-threonyl-[protein] + ADP + H(+). Its function is as follows. MAP4K component of the MAPK pathway required for the mating pheromone response and the regulation of cell polarity and cell cycle. Phosphorylates histone H2B to form H2BS10ph. Is involved in conidiation, aerial hyphal growth and infection-related morphogenesis. In Pyricularia oryzae (strain 70-15 / ATCC MYA-4617 / FGSC 8958) (Rice blast fungus), this protein is Serine/threonine-protein kinase MST20 (MST20).